The chain runs to 159 residues: Growth arrest and DNA damage-inducible protein GADD45 gamma (159 aa).

Residues 43–86 (VYESAKVLNVDPDNVTFCVLAADEEDEGDIALQIHFTLIQAFCC) are homodimerization.

This sequence belongs to the GADD45 family. In terms of assembly, undergoes concentration-dependent homodimerization, which is required for growth inhibititory activity and enhances interaction with PCNA. Interacts with GADD45GIP1. Interacts with PCNA.

Involved in the regulation of growth and apoptosis. Mediates activation of stress-responsive MTK1/MEKK4 MAPKKK. This is Growth arrest and DNA damage-inducible protein GADD45 gamma (Gadd45g) from Mus musculus (Mouse).